The sequence spans 288 residues: Protoheme IX farnesyltransferase 2 (288 aa).

8 consecutive transmembrane segments (helical) span residues 16–36, 38–58, 88–108, 111–131, 139–159, 166–186, 227–247, and 266–286; these read IGVF…GAVP, FAPV…AGAF, LWPL…AFAA, WAAL…TVWL, IVIG…VAVP, LILA…LATA, AFFG…GWFL, and FFAS…EPLL.

This sequence belongs to the UbiA prenyltransferase family. Protoheme IX farnesyltransferase subfamily.

It localises to the cell inner membrane. It catalyses the reaction heme b + (2E,6E)-farnesyl diphosphate + H2O = Fe(II)-heme o + diphosphate. It functions in the pathway porphyrin-containing compound metabolism; heme O biosynthesis; heme O from protoheme: step 1/1. Its function is as follows. Converts heme B (protoheme IX) to heme O by substitution of the vinyl group on carbon 2 of heme B porphyrin ring with a hydroxyethyl farnesyl side group. The sequence is that of Protoheme IX farnesyltransferase 2 from Paramagnetospirillum magneticum (strain ATCC 700264 / AMB-1) (Magnetospirillum magneticum).